A 587-amino-acid polypeptide reads, in one-letter code: Beta-(1--&gt;2)glucan export ATP-binding/permease protein NdvA (587 aa).

The 281-residue stretch at 21-301 folds into the ABC transmembrane type-1 domain; the sequence is VSLVVVANIV…MRQFATQIFE (281 aa). 6 helical membrane passes run 23–43, 57–77, 128–148, 158–178, 248–268, and 272–292; these read LVVV…ILFG, PILF…VLVA, GLWL…ALLI, LSAV…VVMS, MAST…VQAG, and VGDV…LDLM. The region spanning 335 to 569 is the ABC transporter domain; sequence IEFRDVSFGF…NGRFAALLRA (235 aa). Position 368–375 (368–375) interacts with ATP; it reads GPTGAGKT.

The protein belongs to the ABC transporter superfamily. Beta-(1--&gt;2)glucan exporter (TC 3.A.1.108.1) family. Homodimer.

The protein resides in the cell inner membrane. It carries out the reaction [(1-&gt;2)-beta-D-glucosyl](n)(in) + ATP + H2O = [(1-&gt;2)-beta-D-glucosyl](n)(out) + ADP + phosphate + H(+). In terms of biological role, involved in beta-(1--&gt;2)glucan export. Transmembrane domains (TMD) form a pore in the inner membrane and the ATP-binding domain (NBD) is responsible for energy generation. The sequence is that of Beta-(1--&gt;2)glucan export ATP-binding/permease protein NdvA from Rhizobium johnstonii (strain DSM 114642 / LMG 32736 / 3841) (Rhizobium leguminosarum bv. viciae).